The sequence spans 554 residues: CTP synthase (554 aa).

An amidoligase domain region spans residues 1-279; the sequence is MTSSRKVRPT…DTFIIRRLGL (279 aa). Serine 21 is a binding site for CTP. Residue serine 21 participates in UTP binding. ATP is bound by residues 22 to 27 and aspartate 79; that span reads SLGKGL. Positions 79 and 153 each coordinate Mg(2+). Residues 160–162, 200–205, and lysine 236 contribute to the CTP site; these read DIE and KTKPTQ. Residues 200–205 and lysine 236 contribute to the UTP site; that span reads KTKPTQ. The Glutamine amidotransferase type-1 domain maps to 304–553; sequence TVGIVGKYID…VKTALELRVH (250 aa). Residue glycine 367 coordinates L-glutamine. The active-site Nucleophile; for glutamine hydrolysis is the cysteine 394. L-glutamine is bound by residues 395 to 398, glutamate 417, and arginine 478; that span reads LGLQ. Residues histidine 526 and glutamate 528 contribute to the active site.

Belongs to the CTP synthase family. In terms of assembly, homotetramer.

It catalyses the reaction UTP + L-glutamine + ATP + H2O = CTP + L-glutamate + ADP + phosphate + 2 H(+). The catalysed reaction is L-glutamine + H2O = L-glutamate + NH4(+). The enzyme catalyses UTP + NH4(+) + ATP = CTP + ADP + phosphate + 2 H(+). It functions in the pathway pyrimidine metabolism; CTP biosynthesis via de novo pathway; CTP from UDP: step 2/2. With respect to regulation, allosterically activated by GTP, when glutamine is the substrate; GTP has no effect on the reaction when ammonia is the substrate. The allosteric effector GTP functions by stabilizing the protein conformation that binds the tetrahedral intermediate(s) formed during glutamine hydrolysis. Inhibited by the product CTP, via allosteric rather than competitive inhibition. Catalyzes the ATP-dependent amination of UTP to CTP with either L-glutamine or ammonia as the source of nitrogen. Regulates intracellular CTP levels through interactions with the four ribonucleotide triphosphates. The chain is CTP synthase from Corynebacterium glutamicum (strain R).